The sequence spans 279 residues: Tryptophan 2,3-dioxygenase (279 aa).

Residues Phe-48–His-52, Tyr-110, and Arg-114 each bind substrate. Residue His-237 participates in heme binding. A substrate-binding site is contributed by Thr-251.

It belongs to the tryptophan 2,3-dioxygenase family. In terms of assembly, homotetramer. It depends on heme as a cofactor.

The catalysed reaction is L-tryptophan + O2 = N-formyl-L-kynurenine. The protein operates within amino-acid degradation; L-tryptophan degradation via kynurenine pathway; L-kynurenine from L-tryptophan: step 1/2. In terms of biological role, heme-dependent dioxygenase that catalyzes the oxidative cleavage of the L-tryptophan (L-Trp) pyrrole ring and converts L-tryptophan to N-formyl-L-kynurenine. Catalyzes the oxidative cleavage of the indole moiety. The protein is Tryptophan 2,3-dioxygenase of Bacillus anthracis.